A 293-amino-acid polypeptide reads, in one-letter code: ATP synthase gamma chain (293 aa).

It belongs to the ATPase gamma chain family. In terms of assembly, F-type ATPases have 2 components, CF(1) - the catalytic core - and CF(0) - the membrane proton channel. CF(1) has five subunits: alpha(3), beta(3), gamma(1), delta(1), epsilon(1). CF(0) has three main subunits: a, b and c.

It is found in the cell membrane. In terms of biological role, produces ATP from ADP in the presence of a proton gradient across the membrane. The gamma chain is believed to be important in regulating ATPase activity and the flow of protons through the CF(0) complex. The sequence is that of ATP synthase gamma chain from Streptococcus agalactiae serotype Ia (strain ATCC 27591 / A909 / CDC SS700).